A 126-amino-acid polypeptide reads, in one-letter code: NADH-quinone oxidoreductase subunit A (126 aa).

The next 3 helical transmembrane spans lie at phenylalanine 14–phenylalanine 34, phenylalanine 66–tryptophan 86, and isoleucine 96–valine 116.

This sequence belongs to the complex I subunit 3 family. As to quaternary structure, NDH-1 is composed of 13 different subunits. Subunits NuoA, H, J, K, L, M, N constitute the membrane sector of the complex.

It is found in the cell membrane. The catalysed reaction is a quinone + NADH + 5 H(+)(in) = a quinol + NAD(+) + 4 H(+)(out). NDH-1 shuttles electrons from NADH, via FMN and iron-sulfur (Fe-S) centers, to quinones in the respiratory chain. The immediate electron acceptor for the enzyme in this species is believed to be ubiquinone. Couples the redox reaction to proton translocation (for every two electrons transferred, four hydrogen ions are translocated across the cytoplasmic membrane), and thus conserves the redox energy in a proton gradient. The protein is NADH-quinone oxidoreductase subunit A of Buchnera aphidicola subsp. Schizaphis graminum (strain Sg).